The chain runs to 480 residues: Protein nucleotidyltransferase YdiU (480 aa).

Positions 86, 88, 89, 109, 121, 122, 172, and 179 each coordinate ATP. Catalysis depends on D248, which acts as the Proton acceptor. 2 residues coordinate Mg(2+): N249 and D258. D258 contacts ATP.

It belongs to the SELO family. The cofactor is Mg(2+). Mn(2+) is required as a cofactor.

It carries out the reaction L-seryl-[protein] + ATP = 3-O-(5'-adenylyl)-L-seryl-[protein] + diphosphate. The catalysed reaction is L-threonyl-[protein] + ATP = 3-O-(5'-adenylyl)-L-threonyl-[protein] + diphosphate. The enzyme catalyses L-tyrosyl-[protein] + ATP = O-(5'-adenylyl)-L-tyrosyl-[protein] + diphosphate. It catalyses the reaction L-histidyl-[protein] + UTP = N(tele)-(5'-uridylyl)-L-histidyl-[protein] + diphosphate. It carries out the reaction L-seryl-[protein] + UTP = O-(5'-uridylyl)-L-seryl-[protein] + diphosphate. The catalysed reaction is L-tyrosyl-[protein] + UTP = O-(5'-uridylyl)-L-tyrosyl-[protein] + diphosphate. Functionally, nucleotidyltransferase involved in the post-translational modification of proteins. It can catalyze the addition of adenosine monophosphate (AMP) or uridine monophosphate (UMP) to a protein, resulting in modifications known as AMPylation and UMPylation. This Salmonella paratyphi C (strain RKS4594) protein is Protein nucleotidyltransferase YdiU.